The chain runs to 704 residues: RCC1 domain-containing protein DDB_G0295713 (704 aa).

RCC1 repeat units lie at residues 1–48 and 69–120; these read MYCW…VKGE and KNRC…ITDQ. The disordered stretch occupies residues 221–246; that stretch reads YNNNNNNNNNNNNNNNNNNNNNNNNN. The segment covering 222-246 has biased composition (low complexity); it reads NNNNNNNNNNNNNNNNNNNNNNNNN. One copy of the RCC1 3 repeat lies at 298-348; it reads QNQVYGWGENLNGQLGIEGIDYSTEPILIELPLVEIKHISSGAYHSAFVTN. The segment covering 412–431 has biased composition (basic and acidic residues); that stretch reads IKDKNENNETKHTNKNKDNH. The tract at residues 412 to 458 is disordered; sequence IKDKNENNETKHTNKNKDNHDDDDESDHSDDDHHDDDDNDKDSQGIN. Over residues 432–451 the composition is skewed to acidic residues; it reads DDDDESDHSDDDHHDDDDND. Positions 668-698 form a coiled coil; that stretch reads IEQTSTQVANSENENENEIEMKMKMKKNEMK.

The sequence is that of RCC1 domain-containing protein DDB_G0295713 from Dictyostelium discoideum (Social amoeba).